A 281-amino-acid polypeptide reads, in one-letter code: Pantothenate synthetase (281 aa).

30 to 37 lines the ATP pocket; that stretch reads MGALHRGH. Catalysis depends on His37, which acts as the Proton donor. Gln61 serves as a coordination point for (R)-pantoate. Beta-alanine is bound at residue Gln61. Residue 147 to 150 participates in ATP binding; the sequence is GEKD. (R)-pantoate is bound at residue Gln153. ATP is bound by residues Ile176 and 184-187; that span reads LSSR.

It belongs to the pantothenate synthetase family. As to quaternary structure, homodimer.

The protein localises to the cytoplasm. It catalyses the reaction (R)-pantoate + beta-alanine + ATP = (R)-pantothenate + AMP + diphosphate + H(+). It functions in the pathway cofactor biosynthesis; (R)-pantothenate biosynthesis; (R)-pantothenate from (R)-pantoate and beta-alanine: step 1/1. Its function is as follows. Catalyzes the condensation of pantoate with beta-alanine in an ATP-dependent reaction via a pantoyl-adenylate intermediate. In Porphyromonas gingivalis (strain ATCC BAA-308 / W83), this protein is Pantothenate synthetase.